Reading from the N-terminus, the 434-residue chain is NFATC2-interacting protein (434 aa).

2 disordered regions span residues 1 to 63 (MGSP…TPAL) and 176 to 237 (GSED…RAYN). Residues 28-59 (GPQPCPKPRGPQPCPKPRGPQPCPKPRGPQPC) show a composition bias toward pro residues. The segment covering 228–237 (PVRRKGRAYN) has biased composition (basic residues). Residues 275 to 351 (PELTVKVRRG…IDCVVLSPPD (77 aa)) enclose the Ubiquitin-like domain.

The protein localises to the nucleus. The protein resides in the cytoplasm. Regulates the magnitude of NFAT-driven transcription of a specific subset of cytokine genes. This Xenopus tropicalis (Western clawed frog) protein is NFATC2-interacting protein (nfatc2ip).